Here is a 448-residue protein sequence, read N- to C-terminus: MTTRILTGITPTGTPHLGNYAGAIRPAILASRRSDVDSFYFLADYHALIKCDDPARIQRSRLEIAATWLAGGLDVERATFYRQSDIPEIPELTWLLTCVSAKGLLNRAHAYKAAVDRNVEAGEDPDAGVTMGLYSYPVLMAADILMFNAHKIPVGRDQVQHVEMARDIGQRFNHLFGNGREFFVLPEAVIEENVATLPGLDGRKMSKSYDNTIPLFSPSRQLKDAIARIVTDSRAPGEPKDPDSSHLFLLYSAFASAEQVAAFRQELLEGLAWGEAKQRLFQLLDNELGEARERYQALIAKPDDIEDILLAGAAKARRIATPFIAELREAVGLRSLREPLKSAESGKKKAAKAARLVSFRDDDGSFRFRLLDAAGEQLLLSRAFADGKAAGAVSKRLLAGETADLRAEGNAFGLWLDGEAVAQSPAFADAAARDAAIERTREALAPQE.

Residues 10–12 (TPT) and 18–19 (GN) each bind ATP. Positions 11–19 (PTGTPHLGN) match the 'HIGH' region motif. Asp-143 lines the L-tryptophan pocket. Residues 155-157 (GRD), Leu-197, and 204-208 (KMSKS) contribute to the ATP site. Positions 204-208 (KMSKS) match the 'KMSKS' region motif.

The protein belongs to the class-I aminoacyl-tRNA synthetase family. In terms of assembly, homodimer.

Its subcellular location is the cytoplasm. It catalyses the reaction tRNA(Trp) + L-tryptophan + ATP = L-tryptophyl-tRNA(Trp) + AMP + diphosphate + H(+). In terms of biological role, catalyzes the attachment of tryptophan to tRNA(Trp). The chain is Tryptophan--tRNA ligase from Pseudomonas aeruginosa (strain ATCC 15692 / DSM 22644 / CIP 104116 / JCM 14847 / LMG 12228 / 1C / PRS 101 / PAO1).